The chain runs to 459 residues: MYTHMEYLQRCFYKSTSWNEDNIYANVTATSQALLDFSIPSGAKLDVSTQATDHSASSMSLSNMHTINGSLAYLFSSTPLKNTMGTRDVSLQDAVAGFRIIEPFFSGTHTKTDSSDVNRASLLYGRMYFPGTALEAMLIKRISASAQLLVKCINNPHIRKGGTMIVYLQENTPRFSREYIYSTNEALFGFRCLYNFGKPTKISPALIPKFDNSVVSVGAEFWYAALGMSPGLSTAVRYSTRSTSTGKPLTMTLACNPILGHISSTYNVKTSVSSTVCSKYDFNWFSYASNLSIGFELYNFFKPSHVFKHYHADQRRNPSIHHDTLAPVADPYVLGTRPTNNSVSYAFPEKPRKRVVNSIQNLDDYYHINPSRLHRSPAYDVDDDVSGRSVMEAFQNSVNESNFSSVLKGSTSLSDRMVKLLWVGRYKDFLVSTGIKVNLNPFTNLPEINKIGVTFSYAC.

It belongs to the MDM10 family. As to quaternary structure, component of the ER-mitochondria encounter structure (ERMES) or MDM complex, composed of MMM1, MDM10, MDM12 and MDM34. Associates with the mitochondrial outer membrane sorting assembly machinery SAM(core) complex.

Its subcellular location is the mitochondrion outer membrane. In terms of biological role, component of the ERMES/MDM complex, which serves as a molecular tether to connect the endoplasmic reticulum and mitochondria. Components of this complex are involved in the control of mitochondrial shape and protein biogenesis and may function in phospholipid exchange. MDM10 is involved in the late assembly steps of the general translocase of the mitochondrial outer membrane (TOM complex). Functions in the TOM40-specific route of the assembly of outer membrane beta-barrel proteins, including the association of TOM40 with the receptor TOM22 and small TOM proteins. Can associate with the SAM(core) complex as well as the MDM12-MMM1 complex, both involved in late steps of the major beta-barrel assembly pathway, that is responsible for biogenesis of all outer membrane beta-barrel proteins. May act as a switch that shuttles between both complexes and channels precursor proteins into the TOM40-specific pathway. Plays a role in mitochondrial morphology and in the inheritance of mitochondria. In Clavispora lusitaniae (strain ATCC 42720) (Yeast), this protein is Mitochondrial distribution and morphology protein 10.